The following is a 98-amino-acid chain: MTATTQADRYISFSGIDCDGNAKIVLERVVALVALPEYANCFWDRFLIRLAEADKVGARKADELCLACSNTYYIEELFEAAGDEMGLAALRRLEDECC.

It belongs to the CowN family.

In terms of biological role, is required to sustain N(2)-dependent growth in the presence of low levels of carbon monoxide (CO). Probably acts by protecting the N(2) fixation ability of the nitrogenase complex, which is inactivated in the presence of CO. The chain is N(2)-fixation sustaining protein CowN from Paramagnetospirillum magneticum (strain ATCC 700264 / AMB-1) (Magnetospirillum magneticum).